Here is a 717-residue protein sequence, read N- to C-terminus: Ubiquitin carboxyl-terminal hydrolase 11 (717 aa).

Residues 231–268 (ATAPPVHSLEVSSQIRDSSQDSSSSLSKVEKPKEEEGK) form a disordered region. Residues 242–257 (SSQIRDSSQDSSSSLS) show a composition bias toward low complexity. The span at 258–268 (KVEKPKEEEGK) shows a compositional bias: basic and acidic residues. One can recognise a USP domain in the interval 298-707 (TGLQNPCNTC…EVYVLFYERM (410 aa)). Cys307 functions as the Nucleophile in the catalytic mechanism. Residues 531-577 (KKEEITSQKKKSTIFGFHSRSRSKSPHHHHHHHHSSDDSTKNAKKRN) form a disordered region. Residues 549-564 (SRSRSKSPHHHHHHHH) show a composition bias toward basic residues. His649 functions as the Proton acceptor in the catalytic mechanism.

It belongs to the peptidase C19 family.

It catalyses the reaction Thiol-dependent hydrolysis of ester, thioester, amide, peptide and isopeptide bonds formed by the C-terminal Gly of ubiquitin (a 76-residue protein attached to proteins as an intracellular targeting signal).. In Saccharomyces cerevisiae (strain ATCC 204508 / S288c) (Baker's yeast), this protein is Ubiquitin carboxyl-terminal hydrolase 11 (UBP11).